Here is a 449-residue protein sequence, read N- to C-terminus: Phosphoglucosamine mutase (449 aa).

Catalysis depends on S100, which acts as the Phosphoserine intermediate. Mg(2+) is bound by residues S100, D241, D243, and D245. A Phosphoserine modification is found at S100.

The protein belongs to the phosphohexose mutase family. Mg(2+) is required as a cofactor. Post-translationally, activated by phosphorylation.

It carries out the reaction alpha-D-glucosamine 1-phosphate = D-glucosamine 6-phosphate. Functionally, catalyzes the conversion of glucosamine-6-phosphate to glucosamine-1-phosphate. The sequence is that of Phosphoglucosamine mutase from Geobacillus kaustophilus (strain HTA426).